A 297-amino-acid chain; its full sequence is uncharacterized protein (297 aa).

5 helical membrane-spanning segments follow: residues 114–136 (YNRWLVVFMIGLSCAAFAHLSSG), 150–170 (LLYDMLFAAIPAVGFALVFNV), 197–217 (MPIVFATFFATCVIGFLGVHL), 227–247 (AFTVAAIIPMIPGVHAYKAMI), and 269–289 (FINTSFILGAIVFGLALPGLL).

The protein belongs to the ThrE exporter (TC 2.A.79) family.

Its subcellular location is the cell inner membrane. This is an uncharacterized protein from Haemophilus influenzae (strain ATCC 51907 / DSM 11121 / KW20 / Rd).